The sequence spans 285 residues: Purine biosynthesis transcriptional repressor PurR (285 aa).

The interval 1 to 73 is DNA binding domain; the sequence is MKFRRSGRLV…GAAGGVKYIP (73 aa). Residues 74-285 are effector binding domain; it reads KMKQAEAEEF…NLLKNGETES (212 aa). Tyr-102 provides a ligand contact to guanosine 3',5'-bis(diphosphate). Residues Ala-138, Thr-139, Lys-140, and Arg-160 each coordinate 5-phospho-alpha-D-ribose 1-diphosphate. Gly-178 and Ser-179 together coordinate guanosine 3',5'-bis(diphosphate). 5-phospho-alpha-D-ribose 1-diphosphate contacts are provided by Asp-203, Asp-204, Phe-205, Lys-207, and Ala-208. Lys-207 provides a ligand contact to guanosine 3',5'-bis(diphosphate). Guanosine 3',5'-bis(diphosphate) contacts are provided by Gly-209, Gly-210, and Thr-211. 5-phospho-alpha-D-ribose 1-diphosphate is bound at residue Thr-211.

The protein belongs to the purine/pyrimidine phosphoribosyltransferase family. PurR subfamily. In terms of assembly, homodimer.

With respect to regulation, the binding of PurR to DNA, and therefore the repressor activity, is influenced by interaction with the effector molecules 5-phosphoribosyl 1-pyrophosphate (PRPP) and (p)ppGpp. PRPP binds to PurR and reduces affinity of PurR for DNA, which inhibits the repressor activity and induces transcription of the target genes. On the contrary, (p)ppGpp enhances binding of PurR to DNA and repression of the transcription. PRPP and (p)ppGpp compete for PurR binding and allosteric control of transcription. ppGpp maintains PurR-DNA interaction and prevents PRPP from de-repressing PurR regulation during conditions that lead to (p)ppGpp induction, such as upon amino acid starvation. Its function is as follows. DNA-binding transcriptional repressor that controls the expression of a number of genes involved in the synthesis, metabolism and transport of purines. In response to a signal of excess adenine, represses the transcription of the pur operon, which encodes enzymes of the purine biosynthetic pathway. It also represses the expression of the purA and purR genes. In addition, controls the expression of several other genes or operons, which encode enzymes or transporters playing a role in purine nucleotide metabolism. Acts by binding directly to specific DNA sequences, named PurBoxes, in the upstream control regions of affected genes. Two PurBoxes are required for high-affinity PurR binding. Also responds to amino acid starvation via (p)ppGpp, which strongly increases PurR activity and repression of purine nucleotide biosynthesis genes. In Bacillus subtilis (strain 168), this protein is Purine biosynthesis transcriptional repressor PurR.